We begin with the raw amino-acid sequence, 406 residues long: Zinc finger CCCH domain-containing protein 15 homolog (406 aa).

Residues 1-11 (MPPKKAPAGPS) show a composition bias toward low complexity. The interval 1–70 (MPPKKAPAGP…DKKKDEKEKK (70 aa)) is disordered. Residues 12 to 28 (KKTEQKKKEKVIEDKTF) show a composition bias toward basic and acidic residues. A compositionally biased stretch (low complexity) spans 38 to 50 (QQKFIQQVQKQVQ). The span at 56–70 (PRQDGDKKKDEKEKK) shows a compositional bias: basic and acidic residues. Positions 57–82 (RQDGDKKKDEKEKKLADLREMASIFK) form a coiled coil. C3H1-type zinc fingers lie at residues 94–121 (DPKS…HDLS) and 166–203 (PTTE…HALP). Residues 336 to 382 (VDGSGTIASSTRLLDQATEAAKTAAAEDGAASDDENPSSSAPANDAA) form a disordered region. Low complexity-rich tracts occupy residues 352-364 (ATEA…AEDG) and 372-382 (PSSSAPANDAA).

This sequence belongs to the ZC3H15/TMA46 family.

This chain is Zinc finger CCCH domain-containing protein 15 homolog, found in Drosophila pseudoobscura pseudoobscura (Fruit fly).